We begin with the raw amino-acid sequence, 378 residues long: Stimulator of interferon genes protein (378 aa).

The Cytoplasmic segment spans residues 1-17 (MPYSNLHPAIPRPRGHR). The tract at residues 1-189 (MPYSNLHPAI…MFNQLHNNML (189 aa)) is mediates interaction with ZDHHC1 and ZDHHC11. Residues 18-34 (SKYVALIFLVASLMILW) form a helical membrane-spanning segment. Lys19 participates in a covalent cross-link: Glycyl lysine isopeptide (Lys-Gly) (interchain with G-Cter in ubiquitin). The Lumenal portion of the chain corresponds to 35–44 (VAKDPPNHTL). A helical transmembrane segment spans residues 45–69 (KYLALHLASHELGLLLKNLCCLAEE). The Cytoplasmic portion of the chain corresponds to 70–91 (LCHVQSRYQGSYWKAVRACLGC). Residues Cys88 and Cys91 are each lipidated (S-palmitoyl cysteine). A helical membrane pass occupies residues 92–106 (PIHCMAMILLSSYFY). Residues 107-115 (FLQNTADIY) are Lumenal-facing. Residues 116 to 133 (LSWMFGLLVLYKSLSMLL) traverse the membrane as a helical segment. Over 134–378 (GLQSLTPAEV…QPLPLRTDLI (245 aa)) the chain is Cytoplasmic. Residue Lys150 forms a Glycyl lysine isopeptide (Lys-Gly) (interchain with G-Cter in ubiquitin) linkage. Residues 152 to 339 (LNVAHGLAWS…RHIRQEEKEE (188 aa)) form a cyclic dinucleotide-binding domain (CBD) region. A 3',3'-c-di-GMP-binding site is contributed by Gly165. Tyr166 contributes to the 2',3'-cUAMP binding site. Tyr166 serves as a coordination point for 3',3'-cGAMP. Lys235 participates in a covalent cross-link: Glycyl lysine isopeptide (Lys-Gly) (interchain with G-Cter in ubiquitin). Residue Arg237 participates in 2',3'-cUAMP binding. 3',3'-cGAMP is bound at residue Arg237. Arg237 is a 2',3'-cGAMP binding site. Residues 237–240 (RVYS) and Thr262 each bind 3',3'-c-di-GMP. Ser240 is subject to Phosphoserine. Thr262 is a 2',3'-cUAMP binding site. Thr262 lines the 2',3'-cGAMP pocket. Lys337 participates in a covalent cross-link: Glycyl lysine isopeptide (Lys-Gly) (interchain with G-Cter in SUMO). A C-terminal tail (CTT) region spans residues 339-378 (EVTMNAPMTSVAPPPSVLSQEPRLLISGMDQPLPLRTDLI). Phosphoserine; by MAP3K7 is present on Ser354. Phosphoserine; by TBK1 occurs at positions 357 and 365. Residues 362-365 (LLIS) carry the pLxIS motif motif.

Belongs to the STING family. Homodimer; forms a homodimer in absence of cyclic nucleotide (c-di-GMP or cGAMP); 'Lys-63'-linked ubiquitination at Lys-150 is required for homodimerization. Homotetramer; in presence of cyclic nucleotide (c-di-GMP or cGAMP), forms tetramers and higher-order oligomers through side-by-side packing. Interacts (when phosphorylated) with IRF3; following activation and phosphorylation on the pLxIS motif by TBK1, recruits IRF3. Interacts with RIGI, MAVS and SSR2. Interacts with RNF5 and TRIM56. Interacts with TBK1; when homodimer, leading to subsequent production of IFN-beta. Interacts with IFIT1 and IFIT2. Interacts with TRIM29; this interaction induces STING1 ubiquitination and subsequent degradation. Associates with the MHC-II complex. Interacts with STEEP1; interaction takes place upon cGAMP-activation and STING1 phosphorylation by MAP3K7/TAK1 and promotes STING1 translocation to COPII vesicles. Interacts with SEC24A, SEC24B and SEC24C; promoting translocation to COPII vesicles. Interacts (when ubiquitinated) with SQSTM1; leading to relocalization to autophagosomes. Interacts with SURF4. Interacts with HNRNPA2B1. Interacts with ZDHHC1; ZDHHC1 constitutively interacts with STING1 and in presence of DNA viruses activates it by promoting its cGAMP-induced oligomerization and the recruitment of downstream signaling components. Interacts with ZDHHC11; in presence of DNA viruses promotes the recruitment of IRF3 to STING1. Interacts with TOMM70. Interacts with IFI204. Interacts with TAB1; promoting recruitment of TAB1 to the endoplasmic reticulum membrane and subsequent activation of MAP3K7/TAK1. Interacts (via transmembrane domain) with TMEM203. Interacts with DDX41. Post-translationally, phosphorylation by TBK1 leads to activation and production of IFN-beta. Following cyclic nucleotide (c-di-GMP or cGAMP)-binding, activation and translocation from the endoplasmic reticulum, STING1 is phosphorylated by TBK1 at Ser-365 in the pLxIS motif. The phosphorylated pLxIS motif constitutes an IRF3-binding motif, leading to recruitment of the transcription factor IRF3 to induce type-I interferons and other cytokines. The phosphorylated pLxIS motif facilitates SENP2 recruitment during late phase of viral infection. Phosphorylated on tyrosine residues upon MHC-II aggregation. Dephosphorylation by PPP6C leads to inactivation and decreased production of IFN-beta. Phosphorylation at Ser-357 is also required to activate IRF3. Phosphorylation at Ser-354 by MAP3K7/TAK1 facilitates its interaction with STEEP1, promoting STING1 translocation to COPII vesicles. In terms of processing, ubiquitinated. Ubiquitinated via 'Lys-63'-linked ubiquitin chains in response to double-stranded DNA treatment, leading to relocalization to autophagosomes and subsequent degradation; this process is dependent on SQSTM1. 'Lys-63'-linked ubiquitination mediated by TRIM56 at Lys-150 promotes homodimerization and recruitment of the antiviral kinase TBK1 and subsequent production of IFN-beta. 'Lys-48'-linked polyubiquitination at Lys-150 occurring after viral infection is mediated by RNF5 and leads to proteasomal degradation. 'Lys-11'-linked polyubiquitination at Lys-150 by RNF26 leads to stabilize STING1: it protects STING1 from RNF5-mediated 'Lys-48'-linked polyubiquitination. 'Lys-33'-linked and 'Lys-48'-linked deubiquitinated by USP20; leading to its stabilization and promotion of innate antiviral response. 'Lys-48'-linked deubiquitinated by USP44; leading to its stabilization and promotion of innate antiviral response. Deubiquitinated by USP13; leading to inhibition of innate antiviral response. 'Lys-63'-linked deubiquitinated by USP49; leading to inhibition of the subsequent recruitment of TBK1 to the signaling complex. 'Lys-63'-linked ubiquitination mediated by RNF39 promotes the activation of the cGAS-STING pathway. MARCHF5-mediated ubiquitination prevents the oxidation-induced polymer formation. Sumoylated at Lys-337 by TRIM38 during the early phase of viral infection, promoting its stability by preventing its relocalization to autophagosomes and subsequent degradation. Desumoylated by SENP2 during the late phase of viral infection. Post-translationally, palmitoylation takes place in the Golgi apparatus and creates a platform for the recruitment of TBK1. In terms of tissue distribution, present in spleen and thymus tissue. Also present in dendritic cells (at protein level).

It is found in the endoplasmic reticulum membrane. The protein localises to the cytoplasm. Its subcellular location is the perinuclear region. The protein resides in the endoplasmic reticulum-Golgi intermediate compartment membrane. It localises to the golgi apparatus membrane. It is found in the cytoplasmic vesicle. The protein localises to the autophagosome membrane. Its subcellular location is the mitochondrion outer membrane. The protein resides in the cell membrane. It localises to the lysosome membrane. The catalysed reaction is H(+)(in) = H(+)(out). Activated by anticancer drug 5,6-dimethylxanthenone 4-acetic acid (DMXAA). Specifically inhibited by nitrofuran derivatives C-178 and C-176, which covalently bind Cys-91 and prevent palmitoylation and subsequent activation od STING1. Functionally, facilitator of innate immune signaling that acts as a sensor of cytosolic DNA from bacteria and viruses and promotes the production of type I interferon (IFN-alpha and IFN-beta). Innate immune response is triggered in response to non-CpG double-stranded DNA from viruses and bacteria delivered to the cytoplasm. Acts by binding cyclic dinucleotides: recognizes and binds cyclic di-GMP (c-di-GMP), a second messenger produced by bacteria, cyclic UMP-AMP (2',3'-cUAMP), and cyclic GMP-AMP (cGAMP), a messenger produced by CGAS in response to DNA virus in the cytosol. Upon binding to c-di-GMP, cUAMP or cGAMP, STING1 oligomerizes, translocates from the endoplasmic reticulum and is phosphorylated by TBK1 on the pLxIS motif, leading to recruitment and subsequent activation of the transcription factor IRF3 to induce expression of type I interferon and exert a potent anti-viral state. Exhibits 2',3' phosphodiester linkage-specific ligand recognition: can bind both 2'-3' linked cGAMP (2'-3'-cGAMP) and 3'-3' linked cGAMP but is preferentially activated by 2'-3' linked cGAMP. The preference for 2'-3'-cGAMP, compared to other linkage isomers is probably due to the ligand itself, whichs adopts an organized free-ligand conformation that resembles the STING1-bound conformation and pays low energy costs in changing into the active conformation. In addition to promote the production of type I interferons, plays a direct role in autophagy. Following cGAMP-binding, STING1 buds from the endoplasmic reticulum into COPII vesicles, which then form the endoplasmic reticulum-Golgi intermediate compartment (ERGIC). The ERGIC serves as the membrane source for WIPI2 recruitment and LC3 lipidation, leading to formation of autophagosomes that target cytosolic DNA or DNA viruses for degradation by the lysosome. Promotes autophagy by acting as a proton channel that directs proton efflux from the Golgi to facilitate MAP1LC3B/LC3B lipidation. The autophagy- and interferon-inducing activities can be uncoupled and autophagy induction is independent of TBK1 phosphorylation. Autophagy is also triggered upon infection by bacteria: following c-di-GMP-binding, which is produced by live Gram-positive bacteria, promotes reticulophagy. May be involved in translocon function, the translocon possibly being able to influence the induction of type I interferons. May be involved in transduction of apoptotic signals via its association with the major histocompatibility complex class II (MHC-II). This chain is Stimulator of interferon genes protein, found in Mus musculus (Mouse).